A 575-amino-acid polypeptide reads, in one-letter code: Suppressor of tumorigenicity 7 protein-like (575 aa).

The next 2 membrane-spanning stretches (helical) occupy residues 36 to 56 (GLAGTGASLWFVAGLGLLYAL) and 80 to 100 (FYVALTGTSSLISGLIFIFEW). The interval 125-147 (GTESSISEPGSPSRNRENETSRQ) is disordered. Positions 126–137 (TESSISEPGSPS) are enriched in polar residues.

It belongs to the ST7 family.

Its subcellular location is the membrane. This chain is Suppressor of tumorigenicity 7 protein-like (ST7L), found in Homo sapiens (Human).